We begin with the raw amino-acid sequence, 293 residues long: Probable endonuclease 4 (293 aa).

His-77, His-118, Glu-153, Asp-187, His-190, His-221, Asp-234, His-236, and Glu-266 together coordinate Zn(2+).

The protein belongs to the AP endonuclease 2 family. Zn(2+) serves as cofactor.

It carries out the reaction Endonucleolytic cleavage to 5'-phosphooligonucleotide end-products.. Its function is as follows. Endonuclease IV plays a role in DNA repair. It cleaves phosphodiester bonds at apurinic or apyrimidinic (AP) sites, generating a 3'-hydroxyl group and a 5'-terminal sugar phosphate. The chain is Probable endonuclease 4 from Mesoplasma florum (strain ATCC 33453 / NBRC 100688 / NCTC 11704 / L1) (Acholeplasma florum).